A 497-amino-acid chain; its full sequence is UDP-N-acetylmuramoyl-L-alanyl-D-glutamate--2,6-diaminopimelate ligase (497 aa).

2 residues coordinate UDP-N-acetyl-alpha-D-muramoyl-L-alanyl-D-glutamate: L27 and S29. 116 to 122 (GTNGKTT) is a binding site for ATP. UDP-N-acetyl-alpha-D-muramoyl-L-alanyl-D-glutamate contacts are provided by residues N157, 158-159 (TT), S185, Q191, and R193. N6-carboxylysine is present on K225. Meso-2,6-diaminopimelate contacts are provided by residues R392, 416–419 (DNPR), G467, and E471. The Meso-diaminopimelate recognition motif signature appears at 416–419 (DNPR).

It belongs to the MurCDEF family. MurE subfamily. Mg(2+) serves as cofactor. In terms of processing, carboxylation is probably crucial for Mg(2+) binding and, consequently, for the gamma-phosphate positioning of ATP.

The protein resides in the cytoplasm. The enzyme catalyses UDP-N-acetyl-alpha-D-muramoyl-L-alanyl-D-glutamate + meso-2,6-diaminopimelate + ATP = UDP-N-acetyl-alpha-D-muramoyl-L-alanyl-gamma-D-glutamyl-meso-2,6-diaminopimelate + ADP + phosphate + H(+). It functions in the pathway cell wall biogenesis; peptidoglycan biosynthesis. Catalyzes the addition of meso-diaminopimelic acid to the nucleotide precursor UDP-N-acetylmuramoyl-L-alanyl-D-glutamate (UMAG) in the biosynthesis of bacterial cell-wall peptidoglycan. This is UDP-N-acetylmuramoyl-L-alanyl-D-glutamate--2,6-diaminopimelate ligase from Buchnera aphidicola subsp. Schizaphis graminum (strain Sg).